The following is a 282-amino-acid chain: Protein-export membrane protein SecF (282 aa).

Helical transmembrane passes span 9–29 (IAIPIALLILSILLIGFKGIP), 120–140 (EGFKAVGFAFMFMAIVVYLYF), 149–169 (IILSALSDIIMALGAMSLLGI), 174–194 (ATIAALLMVIGYSVDSDILLT), 214–234 (KTGLTMTLTTITAMLILLIVV), and 236–256 (LFIPVADILANIATVLILALI).

The protein belongs to the SecD/SecF family. SecF subfamily. As to quaternary structure, part of the protein translocation apparatus. Forms a complex with SecD.

The protein resides in the cell membrane. In terms of biological role, involved in protein export. This Methanocaldococcus jannaschii (strain ATCC 43067 / DSM 2661 / JAL-1 / JCM 10045 / NBRC 100440) (Methanococcus jannaschii) protein is Protein-export membrane protein SecF.